Consider the following 637-residue polypeptide: Choline O-acetyltransferase (637 aa).

Residues 1–13 are compositionally biased toward basic and acidic residues; the sequence is MPVSKREQSKDTG. The disordered stretch occupies residues 1–20; that stretch reads MPVSKREQSKDTGDPCALPK. The Proton acceptor role is filled by His-329. Residues 407–419, Ser-445, and Gln-545 each bind CoA; that span reads GKEFIKRQKMSPD.

It belongs to the carnitine/choline acetyltransferase family.

It catalyses the reaction choline + acetyl-CoA = acetylcholine + CoA. Functionally, catalyzes the reversible synthesis of acetylcholine (ACh) from acetyl CoA and choline at cholinergic synapses. The chain is Choline O-acetyltransferase (chat) from Danio rerio (Zebrafish).